Here is a 197-residue protein sequence, read N- to C-terminus: Elongation factor Ts (197 aa).

Positions 81–84 are involved in Mg(2+) ion dislocation from EF-Tu; the sequence is TDFV.

The protein belongs to the EF-Ts family.

The protein localises to the cytoplasm. Its function is as follows. Associates with the EF-Tu.GDP complex and induces the exchange of GDP to GTP. It remains bound to the aminoacyl-tRNA.EF-Tu.GTP complex up to the GTP hydrolysis stage on the ribosome. In Fervidobacterium nodosum (strain ATCC 35602 / DSM 5306 / Rt17-B1), this protein is Elongation factor Ts.